A 155-amino-acid chain; its full sequence is Ribonuclease H (155 aa).

The 142-residue stretch at 1–142 (MLKQVEIFTD…CDELARAAAM (142 aa)) folds into the RNase H type-1 domain. Positions 10, 48, 70, and 134 each coordinate Mg(2+).

It belongs to the RNase H family. As to quaternary structure, monomer. Requires Mg(2+) as cofactor.

The protein localises to the cytoplasm. It carries out the reaction Endonucleolytic cleavage to 5'-phosphomonoester.. Its function is as follows. Endonuclease that specifically degrades the RNA of RNA-DNA hybrids. This chain is Ribonuclease H, found in Citrobacter koseri (strain ATCC BAA-895 / CDC 4225-83 / SGSC4696).